The primary structure comprises 134 residues: Cytochrome b5 isoform E (134 aa).

The 77-residue stretch at 5 to 81 folds into the Cytochrome b5 heme-binding domain; sequence RKVLSFEEVS…MDKYFIGEID (77 aa). Residues H40 and H64 each contribute to the heme site. The chain crosses the membrane as a helical span at residues 107-127; it reads FIIKILQFLVPILILGLALVV. An AKR2A-binding sequence (ABS) required for endoplasmic reticulum membrane targeting motif is present at residues 128–134; sequence RHYTKKD.

Belongs to the cytochrome b5 family. Interacts with CER1, BI-1, FAH1 and FAH2. Interacts with AKR2A. Expressed in roots, stems, leaves, flowers and siliques.

Its subcellular location is the cell membrane. It is found in the endoplasmic reticulum membrane. Functionally, membrane bound hemoprotein which function as an electron carrier for several membrane bound oxygenases, including fatty acid desaturases. The protein is Cytochrome b5 isoform E (CYTB5-E) of Arabidopsis thaliana (Mouse-ear cress).